Reading from the N-terminus, the 517-residue chain is MLHMILSQRVILLRKYHSSANALVTKSPNSIPELVKHIDSDLIRNAHKVFDEIPELDVISATAVIGRFVKESRHVEASQAFKRLLCLGIRPNEFTFGTVIGSSTTSRDVKLGKQLHCYALKMGLASNVFVGSAVLNCYVKLSTLTDARRCFDDTRDPNVVSITNLISGYLKKHEFEEALSLFRAMPERSVVTWNAVIGGFSQTGRNEEAVNTFVDMLREGVVIPNESTFPCAITAISNIASHGAGKSIHACAIKFLGKRFNVFVWNSLISFYSKCGNMEDSLLAFNKLEEEQRNIVSWNSMIWGYAHNGRGEEAVAMFEKMVKDTNLRPNNVTILGVLFACNHAGLIQEGYMYFNKAVNDYDDPNLLELEHYACMVDMLSRSGRFKEAEELIKSMPLDPGIGFWKALLGGCQIHSNKRLAKLAASKILELDPRDVSSYVMLSNAYSAMENWQNVSLIRRKMKETGLKRFTGCSWIEVRDQIRVFVNADKNNELKDEVYRMLALVSQHLEENECWKDL.

Residues 1 to 23 constitute a mitochondrion transit peptide; it reads MLHMILSQRVILLRKYHSSANAL. PPR repeat units follow at residues 57–91, 92–126, 127–157, 158–188, 189–223, 225–259, 261–291, 294–329, and 368–398; these read DVIS…GIRP, NEFT…GLAS, NVFV…TRDP, NVVS…MPER, SVVT…GVVI, NEST…LGKR, NVFV…LEEE, NIVS…NLRP, and ELEH…MPLD. The tract at residues 403-478 is type E motif; it reads FWKALLGGCQ…FTGCSWIEVR (76 aa). Positions 479–509 are type E(+) motif; it reads DQIRVFVNADKNNELKDEVYRMLALVSQHLE.

It belongs to the PPR family. PCMP-E subfamily.

It is found in the mitochondrion. This is Pentatricopeptide repeat-containing protein At5g42450, mitochondrial (PCMP-E102) from Arabidopsis thaliana (Mouse-ear cress).